A 246-amino-acid chain; its full sequence is ATP synthase subunit a, chloroplastic (246 aa).

5 consecutive transmembrane segments (helical) span residues 33–53 (VHGQVLLVSWFVLAVIIGFGL), 99–119 (TIFLFVFVSNWSGALVPWALI), 133–153 (INTTVALALLTSIAYFYAGIN), 201–221 (GVLVALVPLVIPIPLMLLGLF), and 222–242 (TSAIQALVFSTLAGAYIGESL).

This sequence belongs to the ATPase A chain family. F-type ATPases have 2 components, CF(1) - the catalytic core - and CF(0) - the membrane proton channel. CF(1) has five subunits: alpha(3), beta(3), gamma(1), delta(1), epsilon(1). CF(0) has four main subunits: a, b, b' and c.

Its subcellular location is the plastid. The protein resides in the chloroplast thylakoid membrane. Its function is as follows. Key component of the proton channel; it plays a direct role in the translocation of protons across the membrane. This is ATP synthase subunit a, chloroplastic from Oltmannsiellopsis viridis (Marine flagellate).